A 746-amino-acid polypeptide reads, in one-letter code: tRNA(Met) cytidine acetyltransferase TmcA (746 aa).

The interval 181–200 (ARAETGGNPPSPGDSACRTE) is disordered. ATP is bound by residues glutamine 202, 228-237 (GRGKSAALGI), and arginine 370. Residues 405 to 617 (VAVERLDRDA…VHLPHQLADP (213 aa)) enclose the N-acetyltransferase domain. Residues 517 to 519 (IAV), 524 to 530 (QGQGLGT), glutamate 557, and arginine 564 contribute to the acetyl-CoA site.

It belongs to the RNA cytidine acetyltransferase family. TmcA subfamily.

It localises to the cytoplasm. The catalysed reaction is cytidine(34) in elongator tRNA(Met) + acetyl-CoA + ATP + H2O = N(4)-acetylcytidine(34) in elongator tRNA(Met) + ADP + phosphate + CoA + H(+). Its function is as follows. Catalyzes the formation of N(4)-acetylcytidine (ac(4)C) at the wobble position of tRNA(Met), by using acetyl-CoA as an acetyl donor and ATP (or GTP). This Nitrosococcus halophilus (strain Nc4) protein is tRNA(Met) cytidine acetyltransferase TmcA.